A 98-amino-acid chain; its full sequence is uncharacterized protein (98 aa).

Residues 53-98 form a disordered region; sequence AALEGGRHRHRGESASGNGIQHGVPPNVALIPSGSTLLTPARSGHV.

This is an uncharacterized protein from Mycolicibacterium smegmatis (strain ATCC 700084 / mc(2)155) (Mycobacterium smegmatis).